The primary structure comprises 397 residues: 4-O-methyl-glucuronoyl methylesterase (397 aa).

The first 18 residues, 1–18 (MVHLTSALLVAGAAFAAA), serve as a signal peptide directing secretion. 3 disulfide bridges follow: Cys31–Cys65, Cys212–Cys347, and Cys244–Cys319. The short motif at 211–216 (GCSRNG) is the GXSYXG catalytic site motif element. Ser213 acts as the Nucleophile in catalysis. Substrate contacts are provided by Lys217, Gln259, Glu267, and Trp310. The active-site Proton donor/acceptor is the His346.

The protein belongs to the carbohydrate esterase 15 (CE15) family.

Its subcellular location is the secreted. The catalysed reaction is a 4-O-methyl-alpha-D-glucuronosyl ester derivative + H2O = 4-O-methyl-alpha-D-glucuronate derivative + an alcohol + H(+). Glucuronoyl esterase which may play a significant role in biomass degradation, as it is considered to disconnect hemicellulose from lignin through the hydrolysis of the ester bond between 4-O-methyl-D-glucuronic acid residues of glucuronoxylans and aromatic alcohols of lignin. The chain is 4-O-methyl-glucuronoyl methylesterase (ge2) from Thermothelomyces thermophilus (strain ATCC 42464 / BCRC 31852 / DSM 1799) (Sporotrichum thermophile).